The primary structure comprises 451 residues: Ribonuclease J (451 aa).

Residues His84, His86, Asp88, His89, His155, and Asp177 each contribute to the Zn(2+) site. 384-388 (HVSGH) is a binding site for substrate. His410 contacts Zn(2+).

This sequence belongs to the metallo-beta-lactamase superfamily. RNA-metabolizing metallo-beta-lactamase-like family. Archaeal RNase J subfamily. In terms of assembly, homodimer. Requires Zn(2+) as cofactor.

The protein resides in the cytoplasm. Its activity is regulated as follows. Inhibited by 1,10-phenanthroline. Its function is as follows. A highly processive 5'-3' exoribonuclease; no evidence has been seen for endonuclease activity. Prefers 5'-phosphate or 5'-hydroxyl ends; 5'-triphosphate substrates are very poorly degraded, does not degrade circular RNA. Does not degrade pre-tRNA(Trp) suggesting it is inhibited by strong secondary structures. Also degrades ssNDA but not dsDNA. The chain is Ribonuclease J from Pyrococcus abyssi (strain GE5 / Orsay).